Here is an 84-residue protein sequence, read N- to C-terminus: Exodeoxyribonuclease 7 small subunit (84 aa).

Belongs to the XseB family. Heterooligomer composed of large and small subunits.

It is found in the cytoplasm. The catalysed reaction is Exonucleolytic cleavage in either 5'- to 3'- or 3'- to 5'-direction to yield nucleoside 5'-phosphates.. Its function is as follows. Bidirectionally degrades single-stranded DNA into large acid-insoluble oligonucleotides, which are then degraded further into small acid-soluble oligonucleotides. The polypeptide is Exodeoxyribonuclease 7 small subunit (Janthinobacterium sp. (strain Marseille) (Minibacterium massiliensis)).